An 892-amino-acid chain; its full sequence is MLSARVLKNTGFLRKQCPLCKSYFWTLRRDQEYCGDQPCVPYGFIGNPPTKISIDSLTELRERFLRFFERRGHARIKRYPVVARWRDDVYLVGASIYDFQPWVTSGAVPPPANPLVISQPSIRLTDVDKVGRSGRHLTGFEMMAHHAFNYPDKFIYWIDETAEYAYEFFTKELGIPPEEITFKESIWEGGGNAGECFEVLVRGLEVATLVFMHYEVKEGKYVELPLKIVDTGYGLERIYWLIRGTPTIYDAVFGPYLDKARRSLGFPEPPSELMGKASVYFGQMDPEVIGLEKAYDIIAEKIGVDPKWLREVFKPQEALYVLADHSRTVSWMIADGVIPSNSGAGYLARLLLRRILKNLKLVGVETPLVELFDMHLKELKADYPEVWEARNLILELVDIEERKYREILKSAPGVVKKAYEEARRRGRAGFDAEDLVSLYDSFGLPPEIVAETAKSLGVEVKIPDDFYSRLAARHAKREKQPEKTLVEMAKIADLPRTRELFYEDPYMKSFKAKVLRVIDGKYVVLDQTAFYAEGGGQPADIGILKHGGGAAKVVDVQRVGHVIVHVVEGEAPPEGSEVVGEIDWDRRYALMKMHTGTHVLIQSIRRVLGPHIWQAGAQKDIPASRIDVTHFKLPTAEEVAEIERLANSVVQANMPVHVKILPRNEAEAKYGFILYQGGVVPAREIRVVQIGPDEAPYDVQACGGTHLKSTGEIGLIKIQKVERIADGVVRFIFTTGLHALKYVQEIERQVAEAASLAGGNRDNLVDSVRRLLQRAEEAERKAQRYTELYAAEFVKNLKAEPVGKYRLAVVELEDEELAKKVAQIATGRDKELVLLVVGGGRVTVYTGGADVGPIVKALREVGFRGGGSRTFAQGVYSGDVKTLIDAVKRALA.

Residues histidine 594, histidine 598, cysteine 702, and histidine 706 each coordinate Zn(2+).

It belongs to the class-II aminoacyl-tRNA synthetase family. It depends on Zn(2+) as a cofactor.

It localises to the cytoplasm. The enzyme catalyses tRNA(Ala) + L-alanine + ATP = L-alanyl-tRNA(Ala) + AMP + diphosphate. Functionally, catalyzes the attachment of alanine to tRNA(Ala) in a two-step reaction: alanine is first activated by ATP to form Ala-AMP and then transferred to the acceptor end of tRNA(Ala). Also edits incorrectly charged Ser-tRNA(Ala) and Gly-tRNA(Ala) via its editing domain. The protein is Alanine--tRNA ligase of Pyrobaculum aerophilum (strain ATCC 51768 / DSM 7523 / JCM 9630 / CIP 104966 / NBRC 100827 / IM2).